A 111-amino-acid polypeptide reads, in one-letter code: Photosystem II reaction center Psb28 protein (111 aa).

This sequence belongs to the Psb28 family. In terms of assembly, part of the photosystem II complex.

It is found in the cellular thylakoid membrane. The protein is Photosystem II reaction center Psb28 protein of Trichormus variabilis (strain ATCC 29413 / PCC 7937) (Anabaena variabilis).